The primary structure comprises 256 residues: Geranylgeranylglyceryl phosphate synthase (256 aa).

Mg(2+) is bound by residues aspartate 28 and serine 53. Sn-glycerol 1-phosphate-binding positions include tyrosine 172 to glycine 178, glycine 203 to glycine 204, and glycine 225 to threonine 226.

It belongs to the GGGP/HepGP synthase family. Group II subfamily. Requires Mg(2+) as cofactor.

It localises to the cytoplasm. The enzyme catalyses sn-glycerol 1-phosphate + (2E,6E,10E)-geranylgeranyl diphosphate = sn-3-O-(geranylgeranyl)glycerol 1-phosphate + diphosphate. It participates in membrane lipid metabolism; glycerophospholipid metabolism. Prenyltransferase that catalyzes the transfer of the geranylgeranyl moiety of geranylgeranyl diphosphate (GGPP) to the C3 hydroxyl of sn-glycerol-1-phosphate (G1P). This reaction is the first ether-bond-formation step in the biosynthesis of archaeal membrane lipids. This Methanococcus maripaludis (strain C6 / ATCC BAA-1332) protein is Geranylgeranylglyceryl phosphate synthase.